A 67-amino-acid chain; its full sequence is Toxin Cex8 (67 aa).

A signal peptide is located at residue alanine 1. One can recognise an LCN-type CS-alpha/beta domain in the interval 2 to 65 (KEGYLVNIYT…SYPYPEKSCG (64 aa)). 4 cysteine pairs are disulfide-bonded: cysteine 13/cysteine 64, cysteine 17/cysteine 40, cysteine 26/cysteine 45, and cysteine 30/cysteine 47. Cysteine 64 bears the Cysteine amide mark. Residues 65–67 (GRK) constitute a propeptide that is removed on maturation.

Belongs to the long (4 C-C) scorpion toxin superfamily. Sodium channel inhibitor family. Beta subfamily. As to expression, expressed by the venom gland.

The protein localises to the secreted. Its function is as follows. Beta toxins bind voltage-independently at site-4 of sodium channels (Nav) and shift the voltage of activation toward more negative potentials thereby affecting sodium channel activation and promoting spontaneous and repetitive firing. The polypeptide is Toxin Cex8 (Centruroides exilicauda (Bark scorpion)).